Reading from the N-terminus, the 317-residue chain is MNPNYLDFEQPIAELEAKIEELRLVGNDSGISLSDEIGKLEDKNRKLTESIFRDLSAWQVSQLSRHPQRPYMLDYVESLFSDFDELHGDRNFADDAAIVGGVARLDDKPVMLIGHQKGRDVKEKVRRNFGMPRPEGYRKACRLMEMAERFKMPVLTFIDTPGAYPGIDAEERGQSEAIAYNLAVMSRLRTPIVATVVGEGGSGGALAIGVCDELQMLQYSTYSVISPEGCASILWKSAEKASEAAQAMGITAERLKELGFVDTLIKEPLGGAHRNPQKMAGHIKDALGASLERLESMEMDDLLSRRYERLMSYGAPQ.

The CoA carboxyltransferase C-terminal domain maps to Lys39–Arg293.

It belongs to the AccA family. In terms of assembly, acetyl-CoA carboxylase is a heterohexamer composed of biotin carboxyl carrier protein (AccB), biotin carboxylase (AccC) and two subunits each of ACCase subunit alpha (AccA) and ACCase subunit beta (AccD).

Its subcellular location is the cytoplasm. It catalyses the reaction N(6)-carboxybiotinyl-L-lysyl-[protein] + acetyl-CoA = N(6)-biotinyl-L-lysyl-[protein] + malonyl-CoA. It participates in lipid metabolism; malonyl-CoA biosynthesis; malonyl-CoA from acetyl-CoA: step 1/1. Component of the acetyl coenzyme A carboxylase (ACC) complex. First, biotin carboxylase catalyzes the carboxylation of biotin on its carrier protein (BCCP) and then the CO(2) group is transferred by the carboxyltransferase to acetyl-CoA to form malonyl-CoA. This Chromohalobacter salexigens (strain ATCC BAA-138 / DSM 3043 / CIP 106854 / NCIMB 13768 / 1H11) protein is Acetyl-coenzyme A carboxylase carboxyl transferase subunit alpha.